The sequence spans 1472 residues: Vacuolar cation-transporting ATPase YPK9 (1472 aa).

Met1 carries the N-acetylmethionine modification. 2 stretches are compositionally biased toward polar residues: residues 1-12 and 72-87; these read MDIPSSNQIQHG and SFQSSNLPSPHSSGNL. Disordered stretches follow at residues 1 to 32, 71 to 115, and 179 to 273; these read MDIPSSNQIQHGQRSERNRRMPRASFSSTATT, HSFQ…SRNP, and AKSY…DDVH. Topologically, residues 1-293 are cytoplasmic; the sequence is MDIPSSNQIQ…YHEKFYPQYA (293 aa). Residue Thr95 is modified to Phosphothreonine. Composition is skewed to low complexity over residues 103-115 and 211-222; these read SSAEQSRSSSRNP and SATHSSSSLSRY. A Phosphoserine modification is found at Ser108. Residues 234 to 243 show a composition bias toward acidic residues; it reads SQTDEILEDE. Residues 294–315 traverse the membrane as a helical segment; that stretch reads PNLHYQRFYIAEEDLVIGIAAY. Residues 316–321 are Vacuolar-facing; sequence QTSKFW. The helical transmembrane segment at 322 to 344 threads the bilayer; it reads YIIYNLCCFLTFGLVYLLTRWLP. Residues 345 to 488 lie on the Cytoplasmic side of the membrane; it reads HLKVKLYGVK…INLRMKTTSE (144 aa). A helical membrane pass occupies residues 489–511; it reads ILFNEVLHPFYVFQVFSIILWGI. Residues 512–514 are Vacuolar-facing; sequence DEY. Residues 515–533 traverse the membrane as a helical segment; that stretch reads YYYAACIFLISVLSIFDSL. Residues 534–693 are Cytoplasmic-facing; sequence NEQKKVSRNL…PTGFKFYRDS (160 aa). Residues 694-713 form a helical membrane-spanning segment; that stretch reads FKYIGFMSLIAIFGFCVSCV. Residues 714-726 lie on the Vacuolar side of the membrane; sequence QFIKLGLDKKTMI. Residues 727-748 form a helical membrane-spanning segment; the sequence is LRALDIITIVVPPALPATLTIG. At 749-1244 the chain is on the cytoplasmic side; sequence TNFALSRLKE…ALVTSFACFQ (496 aa). Asp781 functions as the 4-aspartylphosphate intermediate in the catalytic mechanism. 2 positions are modified to phosphoserine: Ser1117 and Ser1120. Mg(2+) is bound by residues Asp1187 and Asp1191. The chain crosses the membrane as a helical span at residues 1245–1264; that stretch reads YMSLYSAIQFITITILYSRG. Over 1265–1271 the chain is Vacuolar; the sequence is SNLGDFQ. The helical transmembrane segment at 1272-1289 threads the bilayer; it reads FLYIDLLLIVPIAICMSW. The Cytoplasmic portion of the chain corresponds to 1290-1307; sequence SKSYEKIDKKRPSANLVS. The helical transmembrane segment at 1308–1331 threads the bilayer; that stretch reads PKILVPLLISVFLVFLFQFIPWII. Over 1332–1351 the chain is Vacuolar; sequence VQKMSWYIKPIVGGDDAVQS. Residues 1352-1374 form a helical membrane-spanning segment; sequence SDNTVLFFVSNFQYILTAIVLSV. Residues 1375–1387 are Cytoplasmic-facing; sequence GPPYREPMSKNFE. A helical transmembrane segment spans residues 1388 to 1407; sequence FIVDITVSIGASLLLMTLDT. At 1408-1423 the chain is on the vacuolar side; the sequence is ESYLGKMLQLTPISNS. The chain crosses the membrane as a helical span at residues 1424 to 1446; it reads FTMFIIVWVILNYYAQLYIPPSI. Residues 1447–1472 lie on the Cytoplasmic side of the membrane; sequence KGWLKKKKSSKKYKLLIQEEMKLKEV.

It belongs to the cation transport ATPase (P-type) (TC 3.A.3) family. Type V subfamily.

The protein resides in the vacuole membrane. It catalyses the reaction ATP + H2O = ADP + phosphate + H(+). In terms of biological role, vacuolar transporter which plays a role in sequestration of divalent heavy metal ions. The sequence is that of Vacuolar cation-transporting ATPase YPK9 (YPK9) from Saccharomyces cerevisiae (strain ATCC 204508 / S288c) (Baker's yeast).